Here is a 473-residue protein sequence, read N- to C-terminus: Bestrophin-4 (473 aa).

Residues 1–31 (MTVSYTLKVAEARFGGFSGLLLRWRGSIYKL) lie on the Cytoplasmic side of the membrane. Alanine 10 lines the Ca(2+) pocket. A helical membrane pass occupies residues 32–51 (LYKEFLLFGALYAVLSITYR). Over 52-60 (LLLTQEQRY) the chain is Extracellular. A helical transmembrane segment spans residues 61 to 82 (VYAQVARYCNRSADLIPLSFVL). Topologically, residues 83 to 237 (GFYVTLVVNR…DWISIPLVYT (155 aa)) are cytoplasmic. Residues 238–255 (QVVTIAVYSFFALSLVGR) traverse the membrane as a helical segment. Over 256 to 289 (QFVEPEAGAAKPQKLLKPGQEPAPALGDPDMYVP) the chain is Extracellular. Residues 290–303 (LTTLLQFFFYAGWL) form a helical membrane-spanning segment. The Cytoplasmic segment spans residues 304-473 (KVAEQIINPF…AESGDEALEP (170 aa)). 4 residues coordinate Ca(2+): glutamine 308, asparagine 311, aspartate 316, and aspartate 319. 2 disordered regions span residues 379–408 (TFNL…PAAQ) and 428–473 (RNFG…ALEP). Over residues 396–407 (ASPGSGRPAPAA) the composition is skewed to low complexity. Basic and acidic residues predominate over residues 445–461 (FRAEEGGDPEAAARIEE). The segment covering 462-473 (ESAESGDEALEP) has biased composition (acidic residues).

The protein belongs to the anion channel-forming bestrophin (TC 1.A.46) family. Calcium-sensitive chloride channel subfamily. Predominantly found in colon and the weakly in fetal brain, spinal cord, retina, lung, trachea, testis and placenta.

The protein resides in the cell membrane. It carries out the reaction chloride(in) = chloride(out). The catalysed reaction is hydrogencarbonate(in) = hydrogencarbonate(out). Functionally, ligand-gated anion channel that allows the movement of anions across cell membranes when activated by Calcium (Ca2+). Mediates the movement of hydrogencarbonate and chloride. This Homo sapiens (Human) protein is Bestrophin-4.